The primary structure comprises 316 residues: tRNA dimethylallyltransferase (316 aa).

17–24 contributes to the ATP binding site; sequence GPTASGKT. Residue 19–24 participates in substrate binding; that stretch reads TASGKT. Interaction with substrate tRNA regions lie at residues 42–45, 166–170, 247–252, and 280–287; these read DSAL, QRLSR, RCVGYR, and KRQITWLR.

Belongs to the IPP transferase family. In terms of assembly, monomer. The cofactor is Mg(2+).

The enzyme catalyses adenosine(37) in tRNA + dimethylallyl diphosphate = N(6)-dimethylallyladenosine(37) in tRNA + diphosphate. Catalyzes the transfer of a dimethylallyl group onto the adenine at position 37 in tRNAs that read codons beginning with uridine, leading to the formation of N6-(dimethylallyl)adenosine (i(6)A). This chain is tRNA dimethylallyltransferase, found in Escherichia coli O157:H7.